Consider the following 610-residue polypeptide: Menin (610 aa).

The tract at residues 214 to 390 (GVAERSWLYL…SLLEAGEERP (177 aa)) is interaction with FANCD2. The interval 460–552 (REAEAAEAEE…SPPPEGPVLT (93 aa)) is disordered. Residues 484–500 (RRESKPEEPPPPKKPAL) are compositionally biased toward basic and acidic residues. S487 and S543 each carry phosphoserine. T594 carries the post-translational modification Phosphothreonine.

Component of the MLL-HCF complex, at least composed of KMT2A/MLL1, MEN1, ASH2L, RBBP5, DPY30, WDR5, HCFC1 and HCFC2. Component of the menin-associated histone methyltransferase complex, at least composed of KMT2B/MLL4, MEN1, ASH2L, RBBP5, DPY30 and WDR5. Interacts with POLR2B. Interacts with POLR2A phosphorylated at 'Ser-5', but not with the unphosphorylated, nor 'Ser-2' phosphorylated POLR2A forms. Interacts with FANCD2 and DBF4. Interacts with SMAD3, but not with SMAD2, nor SMAD4. Directly interacts with NFKB1, NFKB2 and RELA. Interacts with JUND (via MBM motif); inhibits the interaction of JUND with MAPK10 and the phosphorylation of JUND by MAP kinases MAPK8 and MAPK10. Interacts with KMT2A (via MBM motif). The KMT2A-MEN1 complex interacts with PSIP1 with a greater affinity as MEN1 enhances interaction of KMT2A with PSIP1. As to expression, widely expressed, including in the pituitary, brain, large intestine, spleen, kidney, adrenal gland, ovary, testis, thymus, lung, epididymis, bone marrow, pancreatic islets and placenta.

The protein resides in the nucleus. In terms of biological role, essential component of a MLL/SET1 histone methyltransferase (HMT) complex, a complex that specifically methylates 'Lys-4' of histone H3 (H3K4). Functions as a transcriptional regulator. Binds to the TERT promoter and represses telomerase expression. Represses JUND-mediated transcriptional activation on AP1 sites, as well as that mediated by NFKB subunit RELA. Positively regulates HOXC8 and HOXC6 gene expression. May be involved in normal hematopoiesis through the activation of HOXA9 expression. May be involved in DNA repair. Plays a role in TGFB1-mediated inhibition of cell-proliferation, possibly regulating SMAD3 transcriptional activity. The chain is Menin (Men1) from Rattus norvegicus (Rat).